A 1242-amino-acid polypeptide reads, in one-letter code: Structural polyprotein (1242 aa).

A disordered region spans residues 14–101 (WRPRMPPRPW…PKRKPGRRER (88 aa)). Residues 26 to 42 (RMPTMQRPDQQARQMQQ) show a composition bias toward low complexity. Residues 35–66 (QQARQMQQLIAAVSTLALRQNAAAPQRGKKKQ) are host transcription inhibition. A Nuclear localization signal motif is present at residues 59–96 (PQRGKKKQPRRKKPKPQPEKPKKQEQKPKQKKAPKRKP). The span at 61 to 73 (RGKKKQPRRKKPK) shows a compositional bias: basic residues. The span at 74–86 (PQPEKPKKQEQKP) shows a compositional bias: basic and acidic residues. The interval 82 to 111 (QEQKPKQKKAPKRKPGRRERMCMKIEHDCI) is binding to the viral RNA. The segment covering 87 to 98 (KQKKAPKRKPGR) has biased composition (basic residues). A ribosome-binding region spans residues 96–110 (PGRRERMCMKIEHDC). A disulfide bond links Cys110 and Cys125. The Peptidase S3 domain maps to 110-258 (CIFEVKHEGK…KITPEGTVEW (149 aa)). His136 functions as the Charge relay system in the catalytic mechanism. Residues 141–151 (IDNADLARLSY) carry the Nuclear export signal motif. The segment at 152–157 (KKSSKY) is interaction with spike glycoprotein E2. The active-site Charge relay system is Asp158. The dimerization of the capsid protein stretch occupies residues 180–190 (PEGHYNWHYGA). Ser210 functions as the Charge relay system in the catalytic mechanism. The tract at residues 216-220 (DNKGP) is dimerization of the capsid protein. Positions 259–272 (AASTVTAMCLLTNI) are functions as an uncleaved signal peptide for the precursor of protein E3/E2. Disulfide bonds link Cys267–Cys276, Cys281–Cys285, Cys284–Cys316, Cys343–Cys449, Cys346–Cys352, Cys415–Cys429, Cys477–Cys589, and Cys527–Cys544. Asn271 is a glycosylation site (N-linked (GlcNAc...) asparagine; by host). At 325–690 (STANHFNAYK…YYYGLHPTTT (366 aa)) the chain is on the extracellular side. Interaction with host Mxra8 receptor stretches follow at residues 350-353 (HSCH) and 386-388 (HDH). Interaction with host Mxra8 receptor stretches follow at residues 508 to 511 (QSGN) and 540 to 546 (TINSCTV). Residue Asn586 is glycosylated (N-linked (GlcNAc...) asparagine; by host). The helical transmembrane segment at 691–711 (IVVVIRVSVVVLLSFAASVYM) threads the bilayer. The Cytoplasmic portion of the chain corresponds to 712–746 (CVVARTKCLTPYALTPGAVVPVTIGVLCCAPKAHA). The interaction with the capsid protein stretch occupies residues 714-718 (VARTK). 3 S-palmitoyl cysteine; by host lipidation sites follow: Cys719, Cys739, and Cys740. The transient transmembrane before p62-6K protein processing stretch occupies residues 719–739 (CLTPYALTPGAVVPVTIGVLC). A disulfide bond links Cys719 and Cys740. Residues 747–761 (ASFAEGMAYLWDNNQ) lie on the Extracellular side of the membrane. Asn760 carries N-linked (GlcNAc...) asparagine; by host glycosylation. A helical membrane pass occupies residues 762-782 (SMFWMELTGPLALLILATCCA). The Cytoplasmic segment spans residues 783 to 785 (RSL). The chain crosses the membrane as a helical span at residues 786–806 (LSCCKGSFLVAMSIGSAVASA). The Extracellular segment spans residues 807–1217 (YEHTAIIPNQ…STAMTWAQHL (411 aa)). 4 disulfide bridges follow: Cys855–Cys920, Cys868–Cys900, Cys869–Cys902, and Cys874–Cys884. Positions 890 to 907 (VYPFMWGGAYCFCDSENT) are E1 fusion peptide loop. N-linked (GlcNAc...) asparagine; by host glycans are attached at residues Asn947 and Asn1076. 4 disulfide bridges follow: Cys1065–Cys1077, Cys1107–Cys1180, Cys1112–Cys1184, and Cys1134–Cys1174. A helical transmembrane segment spans residues 1218 to 1238 (AGGVGLLIALAVLILVIVTCV). Residue Cys1237 is the site of S-palmitoyl cysteine; by host attachment. Topologically, residues 1239–1242 (TLRR) are cytoplasmic.

In terms of assembly, homodimer. Homomultimer. Interacts with host karyopherin KPNA4; this interaction allows the nuclear import of the viral capsid protein. Interacts with spike glycoprotein E2. Interacts with host IRAK1; the interaction leads to inhibition of IRAK1-dependent signaling. The precursor of protein E3/E2 and E1 form a heterodimer shortly after synthesis. As to quaternary structure, the precursor of protein E3/E2 and E1 form a heterodimer shortly after synthesis. Processing of the precursor of protein E3/E2 into E2 and E3 results in a heterodimer of the spike glycoproteins E2 and E1. Spike at virion surface are constituted of a trimer of E2-E1 heterodimers. After target cell attachment and endocytosis, E1 change conformation to form homotrimers. Interacts with 6K protein. In terms of assembly, interacts with spike glycoprotein E1. Processing of the precursor of protein E3/E2 into E2 and E3 results in a heterodimer of the spike glycoproteins E2 and E1. Spike at virion surface are constituted of a trimer of E2-E1 heterodimers. Interacts with 6K protein. Interacts with host MXRA8; this interaction mediates virus entry. Oligomer. Interacts with spike glycoprotein E1. Interacts with spike glycoprotein E2. Structural polyprotein: Specific enzymatic cleavages in vivo yield mature proteins. Capsid protein is auto-cleaved during polyprotein translation, unmasking a signal peptide at the N-terminus of the precursor of E3/E2. The remaining polyprotein is then targeted to the host endoplasmic reticulum, where host signal peptidase cleaves it into pE2, 6K and E1 proteins. pE2 is further processed to mature E3 and E2 by host furin in trans-Golgi vesicle. Post-translationally, palmitoylated via thioester bonds. These palmitoylations may induce disruption of the C-terminus transmembrane. This would result in the reorientation of E2 C-terminus from lumenal to cytoplasmic side. In terms of processing, N-glycosylated. Palmitoylated via thioester bonds.

The protein localises to the virion. The protein resides in the host cytoplasm. Its subcellular location is the host cell membrane. It is found in the host nucleus. It localises to the virion membrane. The protein localises to the host Golgi apparatus. The protein resides in the host trans-Golgi network. Its subcellular location is the host endoplasmic reticulum. The catalysed reaction is Autocatalytic release of the core protein from the N-terminus of the togavirus structural polyprotein by hydrolysis of a -Trp-|-Ser- bond.. Forms an icosahedral capsid with a T=4 symmetry composed of 240 copies of the capsid protein surrounded by a lipid membrane through which penetrate 80 spikes composed of trimers of E1-E2 heterodimers. The capsid protein binds to the viral RNA genome at a site adjacent to a ribosome binding site for viral genome translation following genome release. Possesses a protease activity that results in its autocatalytic cleavage from the nascent structural protein. Following its self-cleavage, the capsid protein transiently associates with ribosomes, and within several minutes the protein binds to viral RNA and rapidly assembles into icosahedric core particles. The resulting nucleocapsid eventually associates with the cytoplasmic domain of the spike glycoprotein E2 at the cell membrane, leading to budding and formation of mature virions. In case of infection, new virions attach to target cells and after clathrin-mediated endocytosis their membrane fuses with the host endosomal membrane. This leads to the release of the nucleocapsid into the cytoplasm, followed by an uncoating event necessary for the genomic RNA to become accessible. The uncoating might be triggered by the interaction of capsid proteins with ribosomes. Binding of ribosomes would release the genomic RNA since the same region is genomic RNA-binding and ribosome-binding. Specifically inhibits interleukin-1 receptor-associated kinase 1/IRAK1-dependent signaling during viral entry, representing a means by which the alphaviruses may evade innate immune detection and activation prior to viral gene expression. Functionally, provides the signal sequence for the translocation of the precursor of protein E3/E2 to the host endoplasmic reticulum. Furin-cleaved E3 remains associated with spike glycoprotein E1 and mediates pH protection of the latter during the transport via the secretory pathway. After virion release from the host cell, the assembly protein E3 is gradually released in the extracellular space. Its function is as follows. Plays a role in viral attachment to target host cell, by binding to the cell receptor MXRA8. Synthesized as a p62 precursor which is processed by furin at the cell membrane just before virion budding, giving rise to E2-E1 heterodimer. The p62-E1 heterodimer is stable, whereas E2-E1 is unstable and dissociate at low pH. p62 is processed at the last step, presumably to avoid E1 fusion activation before its final export to cell surface. E2 C-terminus contains a transitory transmembrane that would be disrupted by palmitoylation, resulting in reorientation of the C-terminal tail from lumenal to cytoplasmic side. This step is critical since E2 C-terminus is involved in budding by interacting with capsid proteins. This release of E2 C-terminus in cytoplasm occurs lately in protein export, and precludes premature assembly of particles at the endoplasmic reticulum membrane. In terms of biological role, acts as a viroporin that participates in virus glycoprotein processing and transport to the plasma membrane, cell permeabilization and budding of viral particles. Disrupts the calcium homeostasis of the cell, probably at the endoplasmic reticulum level. This leads to cytoplasmic calcium elevation. Because of its lipophilic properties, the 6K protein is postulated to influence the selection of lipids that interact with the transmembrane domains of the glycoproteins, which, in turn, affects the deformability of the bilayer required for the extreme curvature that occurs as budding proceeds. Present in low amount in virions, about 3% compared to viral glycoproteins. Class II viral fusion protein. Fusion activity is inactive as long as E1 is bound to E2 in mature virion. After virus attachment to target cell via host MXRA8 and endocytosis, acidification of the endosome induce dissociation of E1/E2 heterodimer and concomitant trimerization of the E1 subunits. This E1 trimer is fusion active, and promotes release of viral nucleocapsid in cytoplasm after endosome and viral membrane fusion. Efficient fusion requires the presence of cholesterol and sphingolipid in the target membrane. This is Structural polyprotein from Mayaro virus (strain Brazil) (MAYV).